Consider the following 672-residue polypeptide: Flap endonuclease 1 (672 aa).

Positions 1-106 (MGIKGLIGFL…QTLAKRKLLR (106 aa)) are N-domain. A Mg(2+)-binding site is contributed by Asp-34. DNA contacts are provided by Arg-47 and Arg-72. Residues Asp-88, Glu-160, Glu-162, Asp-181, and Asp-183 each contribute to the Mg(2+) site. The segment at 124 to 252 (AIRKYVGRTV…KTAYNLIKKH (129 aa)) is I-domain. DNA is bound at residue Glu-160. Residues Gly-230 and Asp-232 each coordinate DNA. Asp-232 provides a ligand contact to Mg(2+). The segment at 327–335 (TQLSLKSFF) is interaction with PCNA. Residues 361 to 436 (VESAVDSTSD…DAKKRNKRVP (76 aa)) form a disordered region. A compositionally biased stretch (basic and acidic residues) spans 370 to 382 (DDGKDEVPSDDKV).

Belongs to the XPG/RAD2 endonuclease family. FEN1 subfamily. In terms of assembly, interacts with PCNA. Three molecules of FEN1 bind to one PCNA trimer with each molecule binding to one PCNA monomer. PCNA stimulates the nuclease activity without altering cleavage specificity. It depends on Mg(2+) as a cofactor. Post-translationally, phosphorylated. Phosphorylation upon DNA damage induces relocalization to the nuclear plasma.

It is found in the nucleus. The protein localises to the nucleolus. Its subcellular location is the nucleoplasm. It localises to the mitochondrion. In terms of biological role, structure-specific nuclease with 5'-flap endonuclease and 5'-3' exonuclease activities involved in DNA replication and repair. During DNA replication, cleaves the 5'-overhanging flap structure that is generated by displacement synthesis when DNA polymerase encounters the 5'-end of a downstream Okazaki fragment. It enters the flap from the 5'-end and then tracks to cleave the flap base, leaving a nick for ligation. Also involved in the long patch base excision repair (LP-BER) pathway, by cleaving within the apurinic/apyrimidinic (AP) site-terminated flap. Acts as a genome stabilization factor that prevents flaps from equilibrating into structures that lead to duplications and deletions. Also possesses 5'-3' exonuclease activity on nicked or gapped double-stranded DNA, and exhibits RNase H activity. Also involved in replication and repair of rDNA and in repairing mitochondrial DNA. The sequence is that of Flap endonuclease 1 from Babesia bovis.